The sequence spans 553 residues: Urocanate hydratase (553 aa).

Residues 45 to 46 (GG), Gln-123, 169 to 171 (GMG), Asp-189, Arg-194, 235 to 236 (NA), 256 to 260 (QTSAH), 266 to 267 (YV), Tyr-315, and Gly-485 contribute to the NAD(+) site.

It belongs to the urocanase family. The cofactor is NAD(+).

Its subcellular location is the cytoplasm. It carries out the reaction 4-imidazolone-5-propanoate = trans-urocanate + H2O. Its pathway is amino-acid degradation; L-histidine degradation into L-glutamate; N-formimidoyl-L-glutamate from L-histidine: step 2/3. Catalyzes the conversion of urocanate to 4-imidazolone-5-propionate. The protein is Urocanate hydratase of Staphylococcus aureus (strain COL).